Here is a 178-residue protein sequence, read N- to C-terminus: Large ribosomal subunit protein bL17 (178 aa).

Composition is skewed to low complexity over residues Lys123 to Thr139 and Glu151 to Ala160. Residues Lys123–Ala178 are disordered. Over residues Asp161–Ala178 the composition is skewed to basic and acidic residues.

This sequence belongs to the bacterial ribosomal protein bL17 family. As to quaternary structure, part of the 50S ribosomal subunit. Contacts protein L32.

The protein is Large ribosomal subunit protein bL17 of Cutibacterium acnes (strain DSM 16379 / KPA171202) (Propionibacterium acnes).